The following is a 338-amino-acid chain: Protein UL141 (338 aa).

A signal peptide spans 1–25 (MCRRESLRTLPWLFWVLLSCPRLLE). Residues 37–278 (DIAEKMWAEN…DTGMSPWATR (242 aa)) are Extracellular-facing. Residues Asn117, Asn132, and Asn147 are each glycosylated (N-linked (GlcNAc...) asparagine; by host). Residues 279–299 (GIAAFLGFWSIFTVCFLCYLC) traverse the membrane as a helical segment. The Cytoplasmic segment spans residues 300 to 338 (YLQCCGHWCPTPGRGRRGGEGYRRLPTYDSYPGVKKMKR).

In terms of assembly, interacts with human PVR. Interacts with human TNFRSF10A and TNFRSF10B. Forms a homodimer that engages two TNFRSF10B monomers.

It localises to the host endoplasmic reticulum membrane. Functionally, evasion of NK cell killing. Blocks surface expression of PVR which is a ligand for NK cell-activating receptors. Binds human PVR in the endoplasmic reticulum and prevents its maturation and transport to the cell surface. Targets also the natural killer cell activating ligand NECTIN2 for proteasome-mediated degradation. Additionally promotes intracellular retention of TNFRSF10A/TRAIL-R1 and TNFRSF10B/TRAIL-R2 and thus down-regulates their cell surface expression. This is Protein UL141 (UL141) from Human cytomegalovirus (strain Merlin) (HHV-5).